Reading from the N-terminus, the 71-residue chain is Ceratotoxin-D (71 aa).

The signal sequence occupies residues 1-23 (MANLKAVFLICILAFIAFHCVVG). The propeptide occupies 24–35 (APTAEDSIVVKR).

Homomer of four to six subunits.

It localises to the secreted. Its function is as follows. Female-specific peptides with potent activity against Gram-positive and Gram-negative bacteria. They have as well hemolytic activity. The polypeptide is Ceratotoxin-D (CTXD) (Ceratitis capitata (Mediterranean fruit fly)).